The following is a 378-amino-acid chain: 3-dehydroquinate synthase (378 aa).

NAD(+) is bound by residues 115 to 119 (GVVGD), 139 to 140 (TS), lysine 152, and lysine 161. Residues glutamate 194, histidine 256, and histidine 275 each coordinate Zn(2+).

It belongs to the sugar phosphate cyclases superfamily. Dehydroquinate synthase family. Requires Co(2+) as cofactor. Zn(2+) is required as a cofactor. The cofactor is NAD(+).

Its subcellular location is the cytoplasm. The enzyme catalyses 7-phospho-2-dehydro-3-deoxy-D-arabino-heptonate = 3-dehydroquinate + phosphate. The protein operates within metabolic intermediate biosynthesis; chorismate biosynthesis; chorismate from D-erythrose 4-phosphate and phosphoenolpyruvate: step 2/7. In terms of biological role, catalyzes the conversion of 3-deoxy-D-arabino-heptulosonate 7-phosphate (DAHP) to dehydroquinate (DHQ). The chain is 3-dehydroquinate synthase from Brucella canis (strain ATCC 23365 / NCTC 10854 / RM-666).